The sequence spans 618 residues: Very-long-chain aldehyde decarbonylase GL1-3 (618 aa).

The next 7 membrane-spanning stretches (helical) occupy residues 9-29 (LSSWPWAFLGSYKYLLYGPVV), 46-66 (TSWCLHLILLLALRSLTMLFF), 91-111 (MVIMQTLIAAVLVTSRVFPAT), 121-141 (GWAIAVVLHVAVSEPAFYWAH), 174-194 (LESLILTLVAWAPLAGAFMAG), 289-309 (DFVFLVHVVDVVSSMHVPFAF), and 315-335 (LPFATHLVLLPLWPIAFGFML). A Fatty acid hydroxylase domain is found at 127–267 (VLHVAVSEPA…MPLFDALGGT (141 aa)).

Belongs to the sterol desaturase family. Homodimer. Expressed in germinating seeds and stamens.

The protein localises to the endoplasmic reticulum membrane. The enzyme catalyses a long-chain fatty aldehyde + 2 NADPH + O2 + H(+) = a long-chain alkane + formate + 2 NADP(+) + H2O. Its function is as follows. Aldehyde decarbonylase involved in the conversion of aldehydes to alkanes. Core component of a very-long-chain alkane synthesis complex. This Oryza sativa subsp. japonica (Rice) protein is Very-long-chain aldehyde decarbonylase GL1-3.